Consider the following 335-residue polypeptide: Pyridoxal 5'-phosphate synthase subunit PdxS (335 aa).

Asp-30 lines the D-ribose 5-phosphate pocket. The Schiff-base intermediate with D-ribose 5-phosphate role is filled by Lys-87. Residue Gly-159 participates in D-ribose 5-phosphate binding. Arg-171 serves as a coordination point for D-glyceraldehyde 3-phosphate. Residues Gly-257 and 278–279 each bind D-ribose 5-phosphate; that span reads GS.

It belongs to the PdxS/SNZ family. In terms of assembly, in the presence of PdxT, forms a dodecamer of heterodimers.

It catalyses the reaction aldehydo-D-ribose 5-phosphate + D-glyceraldehyde 3-phosphate + L-glutamine = pyridoxal 5'-phosphate + L-glutamate + phosphate + 3 H2O + H(+). It participates in cofactor biosynthesis; pyridoxal 5'-phosphate biosynthesis. Functionally, catalyzes the formation of pyridoxal 5'-phosphate from ribose 5-phosphate (RBP), glyceraldehyde 3-phosphate (G3P) and ammonia. The ammonia is provided by the PdxT subunit. Can also use ribulose 5-phosphate and dihydroxyacetone phosphate as substrates, resulting from enzyme-catalyzed isomerization of RBP and G3P, respectively. In Thermococcus onnurineus (strain NA1), this protein is Pyridoxal 5'-phosphate synthase subunit PdxS.